Here is a 174-residue protein sequence, read N- to C-terminus: Methylated-DNA--protein-cysteine methyltransferase (174 aa).

The active-site Nucleophile; methyl group acceptor is Cys141.

This sequence belongs to the MGMT family.

Its subcellular location is the cytoplasm. The catalysed reaction is a 6-O-methyl-2'-deoxyguanosine in DNA + L-cysteinyl-[protein] = S-methyl-L-cysteinyl-[protein] + a 2'-deoxyguanosine in DNA. It carries out the reaction a 4-O-methyl-thymidine in DNA + L-cysteinyl-[protein] = a thymidine in DNA + S-methyl-L-cysteinyl-[protein]. Functionally, involved in the cellular defense against the biological effects of O6-methylguanine (O6-MeG) and O4-methylthymine (O4-MeT) in DNA. Repairs the methylated nucleobase in DNA by stoichiometrically transferring the methyl group to a cysteine residue in the enzyme. This is a suicide reaction: the enzyme is irreversibly inactivated. This is Methylated-DNA--protein-cysteine methyltransferase from Thermococcus kodakarensis (strain ATCC BAA-918 / JCM 12380 / KOD1) (Pyrococcus kodakaraensis (strain KOD1)).